The chain runs to 615 residues: Coagulation factor XII (615 aa).

The signal sequence occupies residues 1-19 (MRALLLLGFLLVSLESTLS). The 49-residue stretch at 42–90 (VTGEPCHFPFQYHRQLYHKCTHKGRPGPQPWCATTPNFDQDQRWGYCLE) folds into the Fibronectin type-II domain. Disulfide bonds link C47-C73, C61-C88, C98-C110, C104-C119, C121-C130, C135-C163, C161-C170, C178-C189, C183-C198, C200-C209, C217-C295, C238-C277, and C266-C290. An EGF-like 1 domain is found at 94 to 131 (VKDHCSKHSPCQKGGTCVNMPSGPHCLCPQHLTGNHCQ). Residue T109 is glycosylated (O-linked (Fuc) threonine). The 41-residue stretch at 133–173 (EKCFEPQLLRFFHKNEIWYRTEQAAVARCQCKGPDAHCQRL) folds into the Fibronectin type-I domain. In terms of domain architecture, EGF-like 2 spans 174–210 (ASQACRTNPCLHGGRCLEVEGHRLCHCPVGYTGAFCD). The Kringle domain occupies 217-295 (CYDGRGLSYR…SWEYCDLAQC (79 aa)). N-linked (GlcNAc...) asparagine glycosylation is present at N249. The segment at 298 to 359 (PTQAAPPTPV…SLTRNGPLSC (62 aa)) is disordered. O-linked (GalNAc...) threonine glycans are attached at residues T299 and T305. An O-linked (GalNAc...) serine glycan is attached at S308. A compositionally biased stretch (pro residues) spans 317–326 (PAQPAPPKPQ). Residues 327 to 338 (PTTRTPPQSQTP) show a composition bias toward low complexity. O-linked (GalNAc...) threonine glycans are attached at residues T328, T329, and T337. 7 disulfides stabilise this stretch: C359–C486, C397–C413, C405–C475, C436–C439, C500–C569, C532–C548, and C559–C590. The region spanning 373 to 614 (VVGGLVALRG…YLAWIREHTV (242 aa)) is the Peptidase S1 domain. The active-site Charge relay system is H412. N433 carries an N-linked (GlcNAc...) asparagine glycan. The active-site Charge relay system is D461. The active-site Charge relay system is the S563.

This sequence belongs to the peptidase S1 family. Interacts with HRG; the interaction, which is enhanced in the presence of zinc ions and inhibited by heparin-binding, inhibits factor XII autoactivation and contact-initiated coagulation. Interacts (inactive and activated) with D7L2, an anticoagulant protein from Anopheles gambiae. Interacts (activated) with iripin-8, a serine protease inhibitor from Ixodes ricinus saliva. Interacts (inactive and activated) (via amino acids 1-77) with triafestin-1 and triafestin-2, anticoagulant proteins from Triatoma infestans. Interacts (inactive and activated) (via amino acids 1-77) with short form salivary protein D7R1, an anticoagulant protein from Anopheles stephensi. Interacts (inactive and activated) (via fibronectin type II domain) with haemaphysalin, an anticoagulant protein from Haemaphysalis longicornis. Post-translationally, factor XII is activated by kallikrein in alpha-factor XIIa, which is further converted by trypsin into beta-factor XIIa. Alpha-factor XIIa is composed of an NH2-terminal heavy chain, called coagulation factor XIIa heavy chain, and a COOH-terminal light chain, called coagulation factor XIIa light chain, connected by a disulfide bond. Beta-factor XIIa is composed of 2 chains linked by a disulfide bond, an N-terminal nonapeptide, called beta-factor XIIa part 1, and coagulation factor XIIa light chain, also known in this context as beta-factor XIIa part 2. In terms of processing, O- and N-glycosylated. The O-linked polysaccharides were not identified, but are probably the mucin type linked to GalNAc.

Its subcellular location is the secreted. The enzyme catalyses Selective cleavage of Arg-|-Ile bonds in factor VII to form factor VIIa and factor XI to form factor XIa.. Activity is promoted in the presence of negatively charged surfaces. Factor XII is a serum glycoprotein that participates in the initiation of blood coagulation, fibrinolysis, and the generation of bradykinin and angiotensin. Prekallikrein is cleaved by factor XII to form kallikrein, which then cleaves factor XII first to alpha-factor XIIa and then trypsin cleaves it to beta-factor XIIa. Alpha-factor XIIa activates factor XI to factor XIa. In Homo sapiens (Human), this protein is Coagulation factor XII (F12).